Consider the following 137-residue polypeptide: Probable Hsp20 family chaperone (137 aa).

The sHSP domain occupies 25 to 137; it reads LTNNNNIMKT…PKEKHYIKLN (113 aa).

This sequence belongs to the small heat shock protein (HSP20) family.

Probable chaperone. This is Probable Hsp20 family chaperone from Onion yellows phytoplasma (strain OY-M).